Here is a 468-residue protein sequence, read N- to C-terminus: 3-isopropylmalate dehydratase large subunit (468 aa).

3 residues coordinate [4Fe-4S] cluster: Cys-349, Cys-409, and Cys-412.

Belongs to the aconitase/IPM isomerase family. LeuC type 1 subfamily. Heterodimer of LeuC and LeuD. [4Fe-4S] cluster serves as cofactor.

The catalysed reaction is (2R,3S)-3-isopropylmalate = (2S)-2-isopropylmalate. It functions in the pathway amino-acid biosynthesis; L-leucine biosynthesis; L-leucine from 3-methyl-2-oxobutanoate: step 2/4. Catalyzes the isomerization between 2-isopropylmalate and 3-isopropylmalate, via the formation of 2-isopropylmaleate. In Nitrobacter hamburgensis (strain DSM 10229 / NCIMB 13809 / X14), this protein is 3-isopropylmalate dehydratase large subunit.